Reading from the N-terminus, the 88-residue chain is MEDTVKITAEELKGYIERIEKLEQEKRDVQDHIRDVYAKAADEGWDIKVMKQIIRLRKMDDDDREEQEILLDTYKRALGMSYEEELSE.

Belongs to the UPF0335 family.

The sequence is that of UPF0335 protein WD_0557 from Wolbachia pipientis wMel.